A 158-amino-acid chain; its full sequence is Protein-export protein SecB (158 aa).

This sequence belongs to the SecB family. In terms of assembly, homotetramer, a dimer of dimers. One homotetramer interacts with 1 SecA dimer.

Its subcellular location is the cytoplasm. Its function is as follows. One of the proteins required for the normal export of preproteins out of the cell cytoplasm. It is a molecular chaperone that binds to a subset of precursor proteins, maintaining them in a translocation-competent state. It also specifically binds to its receptor SecA. In Yersinia pestis (strain Pestoides F), this protein is Protein-export protein SecB.